We begin with the raw amino-acid sequence, 247 residues long: GTP cyclohydrolase 1 type 2 homolog (247 aa).

A divalent metal cation contacts are provided by His-63, His-64, Asp-101, His-215, and Glu-219.

Belongs to the GTP cyclohydrolase I type 2/NIF3 family. As to quaternary structure, homohexamer.

The chain is GTP cyclohydrolase 1 type 2 homolog from Yersinia pestis.